The primary structure comprises 164 residues: Transcription elongation factor GreA (164 aa).

A coiled-coil region spans residues 15–76 (DRLKNELDQL…LQELLNSAKV (62 aa)).

Belongs to the GreA/GreB family.

In terms of biological role, necessary for efficient RNA polymerase transcription elongation past template-encoded arresting sites. The arresting sites in DNA have the property of trapping a certain fraction of elongating RNA polymerases that pass through, resulting in locked ternary complexes. Cleavage of the nascent transcript by cleavage factors such as GreA or GreB allows the resumption of elongation from the new 3'terminus. GreA releases sequences of 2 to 3 nucleotides. The protein is Transcription elongation factor GreA of Rhodococcus erythropolis (strain PR4 / NBRC 100887).